Consider the following 210-residue polypeptide: 23.6 kDa heat shock protein, mitochondrial (210 aa).

A mitochondrion-targeting transit peptide spans 1–31 (MASALALKRLLSSSIAPRSRSVLRPAVSSRL). A sHSP domain is found at 100 to 210 (MGASGARRGW…RNDVRQIEIN (111 aa)). Residues 145–165 (GEGKNEEDGGEEGESGNRRFT) are disordered.

Belongs to the small heat shock protein (HSP20) family. May form oligomeric structures.

It localises to the mitochondrion. The sequence is that of 23.6 kDa heat shock protein, mitochondrial (HSP23.6) from Arabidopsis thaliana (Mouse-ear cress).